A 340-amino-acid chain; its full sequence is 2-deoxy-scyllo-inosamine dehydrogenase (340 aa).

Positions 37, 59, 89, 92, 95, 103, and 144 each coordinate Zn(2+).

It belongs to the zinc-containing alcohol dehydrogenase family. DOIA dehydrogenase subfamily. It depends on Zn(2+) as a cofactor.

It carries out the reaction 2-deoxy-scyllo-inosamine + NADP(+) = 3-amino-2,3-dideoxy-scyllo-inosose + NADPH + H(+). It catalyses the reaction 2-deoxy-scyllo-inosamine + NAD(+) = 3-amino-2,3-dideoxy-scyllo-inosose + NADH + H(+). It participates in metabolic intermediate biosynthesis; 2-deoxystreptamine biosynthesis; 2-deoxystreptamine from D-glucose 6-phosphate: step 3/4. It functions in the pathway antibiotic biosynthesis; neomycin biosynthesis. Catalyzes the oxidation of 2-deoxy-scyllo-inosamine (DOIA) with NAD(+) or NADP(+), forming 3-amino-2,3-dideoxy-scyllo-inosose (amino-DOI). The polypeptide is 2-deoxy-scyllo-inosamine dehydrogenase (neoA) (Streptomyces fradiae (Streptomyces roseoflavus)).